A 107-amino-acid polypeptide reads, in one-letter code: UPF0145 protein Ent638_1382 (107 aa).

The protein belongs to the UPF0145 family.

The polypeptide is UPF0145 protein Ent638_1382 (Enterobacter sp. (strain 638)).